The sequence spans 132 residues: UPF0299 membrane protein YohJ (132 aa).

The next 4 helical transmembrane spans lie at 7–27 (IIWQYLRAFVLIYACLYAGIF), 31–51 (LLPVTIPGSIIGMLILFVLLA), 63–83 (GCYVLIRYMALLFVPIGVGVM), and 93–113 (FGPVVVSCAVCTLVVFLVVSW).

It belongs to the UPF0299 family.

The protein resides in the cell inner membrane. The sequence is that of UPF0299 membrane protein YohJ from Shigella boydii serotype 18 (strain CDC 3083-94 / BS512).